A 219-amino-acid polypeptide reads, in one-letter code: Glutathione S-transferase U19 (219 aa).

The 80-residue stretch at 3 to 82 (NEVILLDFWP…YIDEVWSHKN (80 aa)) folds into the GST N-terminal domain. Glutathione contacts are provided by residues 13 to 14 (SM), 39 to 40 (NK), 53 to 54 (KI), and 66 to 67 (ES). One can recognise a GST C-terminal domain in the interval 88–208 (DPYLRAQARF…LPDPEKVTEF (121 aa)). At S198 the chain carries Phosphoserine.

The protein belongs to the GST superfamily. Tau family.

The protein localises to the cytoplasm. It localises to the cytosol. It catalyses the reaction RX + glutathione = an S-substituted glutathione + a halide anion + H(+). Functionally, catalyzes the glutathionylation of 12-oxophytodienoate (OPDA). In vitro, possesses glutathione S-transferase activity toward 1-chloro-2,4-dinitrobenzene (CDNB) and benzyl isothiocyanate (BITC), and glutathione peroxidase activity toward cumene hydroperoxide. The polypeptide is Glutathione S-transferase U19 (GSTU19) (Arabidopsis thaliana (Mouse-ear cress)).